Here is a 163-residue protein sequence, read N- to C-terminus: 2-C-methyl-D-erythritol 2,4-cyclodiphosphate synthase (163 aa).

A divalent metal cation-binding residues include Asp-12 and His-14. Residues 12–14 (DVH) and 38–39 (HS) contribute to the 4-CDP-2-C-methyl-D-erythritol 2-phosphate site. His-46 contributes to the a divalent metal cation binding site. 4-CDP-2-C-methyl-D-erythritol 2-phosphate-binding positions include 60–62 (DIG), 136–139 (TTSE), Phe-143, and Arg-146.

The protein belongs to the IspF family. In terms of assembly, homotrimer. It depends on a divalent metal cation as a cofactor.

It carries out the reaction 4-CDP-2-C-methyl-D-erythritol 2-phosphate = 2-C-methyl-D-erythritol 2,4-cyclic diphosphate + CMP. It functions in the pathway isoprenoid biosynthesis; isopentenyl diphosphate biosynthesis via DXP pathway; isopentenyl diphosphate from 1-deoxy-D-xylulose 5-phosphate: step 4/6. Involved in the biosynthesis of isopentenyl diphosphate (IPP) and dimethylallyl diphosphate (DMAPP), two major building blocks of isoprenoid compounds. Catalyzes the conversion of 4-diphosphocytidyl-2-C-methyl-D-erythritol 2-phosphate (CDP-ME2P) to 2-C-methyl-D-erythritol 2,4-cyclodiphosphate (ME-CPP) with a corresponding release of cytidine 5-monophosphate (CMP). In Xanthomonas campestris pv. campestris (strain 8004), this protein is 2-C-methyl-D-erythritol 2,4-cyclodiphosphate synthase.